Here is a 247-residue protein sequence, read N- to C-terminus: MSGHNKWSTIKHKKGAADAKRGKIFTKIIKEISVAAKLGGGDPAANPRLRTAIDKAKGENMPKDNIERAIKKGTGGMEGVVYEEIVYEGYGPGGVAVLVEVMTDNRNRTVSEVRSIFTKCNGNMGEAGCVAWMFDKKGVISYDTSLDFDQLFEAALEAGAEDVVEEDEQIEVYTEPSSFIEVRDALEAKGFKFQSAEITMIPQTQVALEGKQAESMLKMMDRLEDCDDVQNVYANFDISADEMEKMM.

This sequence belongs to the TACO1 family.

It localises to the cytoplasm. The sequence is that of Probable transcriptional regulatory protein Glov_1245 from Trichlorobacter lovleyi (strain ATCC BAA-1151 / DSM 17278 / SZ) (Geobacter lovleyi).